A 202-amino-acid polypeptide reads, in one-letter code: UMP-CMP kinase 3 (202 aa).

Residue 24-29 (GSGKGT) coordinates ATP. The segment at 44–73 (SAGDLLRAEIKSGSENGTMIQNMIKEGKIV) is NMP. A ribonucleoside 5'-phosphate is bound by residues Arg50, 71–73 (KIV), and 98–101 (GFPR). Asn105 is a CMP binding site. An LID region spans residues 136–144 (GRNQGREDD). Position 137 (Arg137) interacts with ATP. A ribonucleoside 5'-phosphate is bound by residues Arg141 and Arg152. Position 180 (Lys180) interacts with ATP.

Monomer. Mg(2+) is required as a cofactor.

It is found in the cytoplasm. Its subcellular location is the nucleus. The catalysed reaction is CMP + ATP = CDP + ADP. It carries out the reaction dCMP + ATP = dCDP + ADP. It catalyses the reaction UMP + ATP = UDP + ADP. Its function is as follows. Catalyzes the phosphorylation of pyrimidine nucleoside monophosphates at the expense of ATP. Plays an important role in de novo pyrimidine nucleotide biosynthesis. Has preference for UMP and CMP as phosphate acceptors. Does not act on dCMP and dUMP. The sequence is that of UMP-CMP kinase 3 (UMK3) from Arabidopsis thaliana (Mouse-ear cress).